A 239-amino-acid polypeptide reads, in one-letter code: Type II restriction enzyme Eco47II (239 aa).

It carries out the reaction Endonucleolytic cleavage of DNA to give specific double-stranded fragments with terminal 5'-phosphates.. Functionally, a P subtype restriction enzyme that recognizes the double-stranded sequence 5'-GGNCC-3'; the cleavage site is unknown. The sequence is that of Type II restriction enzyme Eco47II from Escherichia coli.